The following is a 466-amino-acid chain: Rho GTPase-activating protein 1 (466 aa).

2 disordered regions span residues 1–31 (MTEV…SLSY) and 65–84 (EEQD…DDGG). The span at 8–31 (PSSPSASHSSSSSSSSPSPSSLSY) shows a compositional bias: low complexity. The span at 65–74 (EEQDLRRRSS) shows a compositional bias: basic and acidic residues. The CRIB domain occupies 117-130 (IGWPTNVRHVAHVT). The region spanning 162 to 342 (VSTESMQLSY…TLIEKTLRER (181 aa)) is the Rho-GAP domain. The disordered stretch occupies residues 354–402 (PLEPSDESGHQSPSQSLAFNTSEQSEETQSDNIENAENQSSSSEISDEL). Polar residues-rich tracts occupy residues 363 to 376 (HQSP…NTSE) and 383 to 397 (SDNI…SSSE).

Functionally, acts as a GTPase activator for the Rac-type GTPase by converting it to an inactive GDP-bound state. The sequence is that of Rho GTPase-activating protein 1 (ROPGAP1) from Arabidopsis thaliana (Mouse-ear cress).